A 294-amino-acid polypeptide reads, in one-letter code: Large ribosomal subunit protein uL2 (294 aa).

Disordered regions lie at residues 1–37 (MGIR…RPEK) and 228–294 (GSVM…RAAQ). The span at 23-37 (ELSRDENGKRPRPEK) shows a compositional bias: basic and acidic residues. The span at 264-285 (KTRKRNKPSNKFIVRGRRRGGR) shows a compositional bias: basic residues.

It belongs to the universal ribosomal protein uL2 family. As to quaternary structure, part of the 50S ribosomal subunit. Forms a bridge to the 30S subunit in the 70S ribosome.

One of the primary rRNA binding proteins. Required for association of the 30S and 50S subunits to form the 70S ribosome, for tRNA binding and peptide bond formation. It has been suggested to have peptidyltransferase activity; this is somewhat controversial. Makes several contacts with the 16S rRNA in the 70S ribosome. This is Large ribosomal subunit protein uL2 from Synechococcus sp. (strain JA-2-3B'a(2-13)) (Cyanobacteria bacterium Yellowstone B-Prime).